Here is a 353-residue protein sequence, read N- to C-terminus: tRNA-specific 2-thiouridylase MnmA 2 (353 aa).

6 to 13 (LLSGGVDS) serves as a coordination point for ATP. Residues 92–94 (NPD) are interaction with target base in tRNA. The active-site Nucleophile is C97. C97 and C192 are joined by a disulfide. G120 contributes to the ATP binding site. The tract at residues 142–144 (KDQ) is interaction with tRNA. The active-site Cysteine persulfide intermediate is C192.

This sequence belongs to the MnmA/TRMU family.

It is found in the cytoplasm. It catalyses the reaction S-sulfanyl-L-cysteinyl-[protein] + uridine(34) in tRNA + AH2 + ATP = 2-thiouridine(34) in tRNA + L-cysteinyl-[protein] + A + AMP + diphosphate + H(+). In terms of biological role, catalyzes the 2-thiolation of uridine at the wobble position (U34) of tRNA, leading to the formation of s(2)U34. This chain is tRNA-specific 2-thiouridylase MnmA 2, found in Bacteroides fragilis (strain ATCC 25285 / DSM 2151 / CCUG 4856 / JCM 11019 / LMG 10263 / NCTC 9343 / Onslow / VPI 2553 / EN-2).